A 745-amino-acid chain; its full sequence is MEKDVVSLQDALEHGLTAEEFQKIQEILGRIPNSTELGIFSAMWSEHCSYKNSVLKLKTLPTSSDKLLAKAGEENAGAMDIGDGLAVVFKIESHNHPTAVEPYQGAATGVGGIMRDIFTMGARPIVSLNSLRFGNPDEPRNKYLLSRAVKGIGDYGNSLGIAVSGGELFIDECFSKNPLVNAMTVGIVRHDQMASATTGGQVGNAVYIVGATTGRDGIHGASFASKDLSKESESKRSAVQVGDPFMEKLLMEASLEAIQKGLLIGIQDMGAAGISCATSEMSAKGKTGMKIDLDLVPFRETGMNAYEVMLSESQERMLVVPKKGKESELVSIFEKWNLNAVRIGEVTADGFIEIYMGGKLKAHIPAESLVLGGGAPRYERETKRPSYLDAVKTWKPNSILDITPGANTKDVLLNILSSWNVCSRKPITEQYDSEVGLVKLIGPGLDGGLSSIPDTNKALATATDCNSRYTYLDPYKGAQFAVCEAARNVYVTGATPYGVTNNLNFANPYIPENYYMFSECIRGMGDACRFLGLPVTGGNVSFYNESPEGPIFPTPTIGMVGILQDKKKFLSNFPKEVGIELAVLGNFRPSLGGSEYLKKIHGQVNGSIPEIDIKEELELCKLILSLNEKGALKSARDLSLGGIGIALSKTILFSGLGIDAELIAFKQSRLDLTLFGESSTTVLVGFDSSWKEKIREQTEEKGLKFYPVGKTTSSELLKLKDIGVEVSFSELNGPYEKGLEVVFAL.

His-47 is an active-site residue. Tyr-50 and Lys-90 together coordinate ATP. Residue Glu-92 participates in Mg(2+) binding. Substrate is bound by residues Ser-93–His-96 and Arg-115. His-94 acts as the Proton acceptor in catalysis. Position 116 (Asp-116) interacts with Mg(2+). Gln-240 provides a ligand contact to substrate. Asp-268 lines the Mg(2+) pocket. Residue Glu-312 to Gln-314 coordinates substrate. ATP is bound by residues Asn-501 and Gly-538. Asn-539 contacts Mg(2+). Position 541 (Ser-541) interacts with substrate.

The protein belongs to the FGAMS family. As to quaternary structure, monomer. Part of the FGAM synthase complex composed of 1 PurL, 1 PurQ and 2 PurS subunits.

The protein localises to the cytoplasm. It carries out the reaction N(2)-formyl-N(1)-(5-phospho-beta-D-ribosyl)glycinamide + L-glutamine + ATP + H2O = 2-formamido-N(1)-(5-O-phospho-beta-D-ribosyl)acetamidine + L-glutamate + ADP + phosphate + H(+). It participates in purine metabolism; IMP biosynthesis via de novo pathway; 5-amino-1-(5-phospho-D-ribosyl)imidazole from N(2)-formyl-N(1)-(5-phospho-D-ribosyl)glycinamide: step 1/2. In terms of biological role, part of the phosphoribosylformylglycinamidine synthase complex involved in the purines biosynthetic pathway. Catalyzes the ATP-dependent conversion of formylglycinamide ribonucleotide (FGAR) and glutamine to yield formylglycinamidine ribonucleotide (FGAM) and glutamate. The FGAM synthase complex is composed of three subunits. PurQ produces an ammonia molecule by converting glutamine to glutamate. PurL transfers the ammonia molecule to FGAR to form FGAM in an ATP-dependent manner. PurS interacts with PurQ and PurL and is thought to assist in the transfer of the ammonia molecule from PurQ to PurL. The chain is Phosphoribosylformylglycinamidine synthase subunit PurL from Leptospira borgpetersenii serovar Hardjo-bovis (strain JB197).